The chain runs to 525 residues: Lysine--tRNA ligase (525 aa).

The 'HIGH' region motif lies at 44–52 (PSGLPHIGT). The 'KMSKS' region motif lies at 290–294 (KISKS). K293 lines the ATP pocket.

It belongs to the class-I aminoacyl-tRNA synthetase family.

It localises to the cytoplasm. The catalysed reaction is tRNA(Lys) + L-lysine + ATP = L-lysyl-tRNA(Lys) + AMP + diphosphate. The protein is Lysine--tRNA ligase of Rickettsia felis (strain ATCC VR-1525 / URRWXCal2) (Rickettsia azadi).